The primary structure comprises 178 residues: Interleukin-10 (178 aa).

The N-terminal stretch at 1 to 18 is a signal peptide; sequence MHSSALLCCLVFLTGVRA. 2 cysteine pairs are disulfide-bonded: C30–C126 and C80–C132. The N-linked (GlcNAc...) asparagine glycan is linked to N134.

Belongs to the IL-10 family. As to quaternary structure, homodimer. Interacts with IL10RA and IL10RB.

It is found in the secreted. Major immune regulatory cytokine that acts on many cells of the immune system where it has profound anti-inflammatory functions, limiting excessive tissue disruption caused by inflammation. Mechanistically, IL10 binds to its heterotetrameric receptor comprising IL10RA and IL10RB leading to JAK1 and STAT2-mediated phosphorylation of STAT3. In turn, STAT3 translocates to the nucleus where it drives expression of anti-inflammatory mediators. Targets antigen-presenting cells (APCs) such as macrophages and monocytes and inhibits their release of pro-inflammatory cytokines including granulocyte-macrophage colony-stimulating factor /GM-CSF, granulocyte colony-stimulating factor/G-CSF, IL-1 alpha, IL-1 beta, IL-6, IL-8 and TNF-alpha. Also interferes with antigen presentation by reducing the expression of MHC-class II and co-stimulatory molecules, thereby inhibiting their ability to induce T cell activation. In addition, controls the inflammatory response of macrophages by reprogramming essential metabolic pathways including mTOR signaling. This chain is Interleukin-10 (IL10), found in Saimiri sciureus (Common squirrel monkey).